The sequence spans 66 residues: Large ribosomal subunit protein uL29c (66 aa).

This sequence belongs to the universal ribosomal protein uL29 family.

The protein resides in the plastid. It localises to the chloroplast. This chain is Large ribosomal subunit protein uL29c, found in Gracilaria tenuistipitata var. liui (Red alga).